The primary structure comprises 245 residues: Thiopurine S-methyltransferase (245 aa).

29–40 (WQDKWVSHKIGF) contributes to the S-adenosyl-L-methionine binding site. F40 is a substrate binding site. An N6-acetyllysine modification is found at K58. S-adenosyl-L-methionine is bound by residues L69, E90, 134–135 (SI), and R152.

It belongs to the class I-like SAM-binding methyltransferase superfamily. TPMT family. As to quaternary structure, monomer.

The protein resides in the cytoplasm. It carries out the reaction S-adenosyl-L-methionine + a thiopurine = S-adenosyl-L-homocysteine + a thiopurine S-methylether.. The chain is Thiopurine S-methyltransferase (TPMT) from Oryctolagus cuniculus (Rabbit).